The chain runs to 76 residues: uncharacterized protein (76 aa).

A disordered region spans residues 1–28 (MSTEKLEASEEPQAPLANTSETNSIKGD). Residues 16 to 26 (LANTSETNSIK) are compositionally biased toward polar residues.

It is found in the cytoplasm. Its subcellular location is the bud. It localises to the bud neck. This is an uncharacterized protein from Saccharomyces cerevisiae (strain ATCC 204508 / S288c) (Baker's yeast).